The chain runs to 507 residues: Ribosomal protein uS12 methylthiotransferase RimO (507 aa).

Positions 13-124 (RRVALLTLGC…ISDRLGAVLA (112 aa)) constitute an MTTase N-terminal domain. Residues Cys22, Cys58, Cys87, Cys205, Cys209, and Cys212 each coordinate [4Fe-4S] cluster. Residues 191-422 (LDTGPVASLK…ALADELCAQR (232 aa)) form the Radical SAM core domain. The TRAM domain maps to 424–497 (EQRLGSTVQV…GVDLVAVPDA (74 aa)).

This sequence belongs to the methylthiotransferase family. RimO subfamily. [4Fe-4S] cluster is required as a cofactor.

It localises to the cytoplasm. It catalyses the reaction L-aspartate(89)-[ribosomal protein uS12]-hydrogen + (sulfur carrier)-SH + AH2 + 2 S-adenosyl-L-methionine = 3-methylsulfanyl-L-aspartate(89)-[ribosomal protein uS12]-hydrogen + (sulfur carrier)-H + 5'-deoxyadenosine + L-methionine + A + S-adenosyl-L-homocysteine + 2 H(+). Functionally, catalyzes the methylthiolation of an aspartic acid residue of ribosomal protein uS12. The protein is Ribosomal protein uS12 methylthiotransferase RimO of Salinispora tropica (strain ATCC BAA-916 / DSM 44818 / JCM 13857 / NBRC 105044 / CNB-440).